A 276-amino-acid polypeptide reads, in one-letter code: Large ribosomal subunit protein uL2 (276 aa).

The disordered stretch occupies residues 221–276 (RGSAMNPNDHPHGGGEGRAPIGRKSPMTPWGKKARGVKTRDRKKASNALIIRRRKK). Over residues 252 to 276 (KKARGVKTRDRKKASNALIIRRRKK) the composition is skewed to basic residues.

Belongs to the universal ribosomal protein uL2 family. As to quaternary structure, part of the 50S ribosomal subunit. Forms a bridge to the 30S subunit in the 70S ribosome.

Its function is as follows. One of the primary rRNA binding proteins. Required for association of the 30S and 50S subunits to form the 70S ribosome, for tRNA binding and peptide bond formation. It has been suggested to have peptidyltransferase activity; this is somewhat controversial. Makes several contacts with the 16S rRNA in the 70S ribosome. This chain is Large ribosomal subunit protein uL2, found in Aster yellows witches'-broom phytoplasma (strain AYWB).